The following is a 56-amino-acid chain: Large ribosomal subunit protein bL32 (56 aa).

The span at 1 to 16 shows a compositional bias: basic residues; the sequence is MAVQKSKKSRARRGMR. Residues 1–56 form a disordered region; that stretch reads MAVQKSKKSRARRGMRRSHDAISGPSLTVDQTSGETHRRHHVTADGYYKGVQVISK. Residues 25–34 are compositionally biased toward polar residues; the sequence is PSLTVDQTSG.

Belongs to the bacterial ribosomal protein bL32 family.

In Pseudoalteromonas translucida (strain TAC 125), this protein is Large ribosomal subunit protein bL32.